A 688-amino-acid chain; its full sequence is Glycine--tRNA ligase beta subunit (688 aa).

It belongs to the class-II aminoacyl-tRNA synthetase family. As to quaternary structure, tetramer of two alpha and two beta subunits.

It is found in the cytoplasm. The catalysed reaction is tRNA(Gly) + glycine + ATP = glycyl-tRNA(Gly) + AMP + diphosphate. This is Glycine--tRNA ligase beta subunit from Syntrophotalea carbinolica (strain DSM 2380 / NBRC 103641 / GraBd1) (Pelobacter carbinolicus).